The chain runs to 28 residues: Ornatin-D (28 aa).

Belongs to the ornatin family.

The protein resides in the secreted. Potent inhibitor of fibrinogen interaction with platelet receptors expressed on glycoprotein IIb-IIIa complex. May prevent blood from clotting during either feeding and/or storage of ingested blood. In Placobdella ornata (Turtle leech), this protein is Ornatin-D.